The following is a 173-amino-acid chain: Large ribosomal subunit protein bL17 (173 aa).

The segment at 136–173 (AEEEAPAVEAEATEATEAPVEEAAAVEAEAPADAEKAE) is disordered. A compositionally biased stretch (acidic residues) spans 138 to 149 (EEAPAVEAEATE). The segment covering 150 to 166 (ATEAPVEEAAAVEAEAP) has biased composition (low complexity).

Belongs to the bacterial ribosomal protein bL17 family. In terms of assembly, part of the 50S ribosomal subunit. Contacts protein L32.

The protein is Large ribosomal subunit protein bL17 of Bifidobacterium longum subsp. infantis (strain ATCC 15697 / DSM 20088 / JCM 1222 / NCTC 11817 / S12).